We begin with the raw amino-acid sequence, 221 residues long: Epididymal secretory glutathione peroxidase (221 aa).

The signal sequence occupies residues 1 to 21 (MAIQLRVFYLVPLLLASYVQT). C73 is a catalytic residue.

It belongs to the glutathione peroxidase family. In terms of tissue distribution, epididymis.

The protein resides in the secreted. It catalyses the reaction 2 glutathione + H2O2 = glutathione disulfide + 2 H2O. Functionally, protects cells and enzymes from oxidative damage, by catalyzing the reduction of hydrogen peroxide, lipid peroxides and organic hydroperoxide, by glutathione. May constitute a glutathione peroxidase-like protective system against peroxide damage in sperm membrane lipids. In Rattus norvegicus (Rat), this protein is Epididymal secretory glutathione peroxidase (Gpx5).